The following is a 674-amino-acid chain: Fidgetin-like protein 1 (674 aa).

The disordered stretch occupies residues 157-179 (SQESDSLPNSAHDRDRTQDFPES). Over residues 167–179 (AHDRDRTQDFPES) the composition is skewed to basic and acidic residues. A Glycyl lysine isopeptide (Lys-Gly) (interchain with G-Cter in SUMO2) cross-link involves residue K225. Position 259 is a phosphoserine (S259). The tract at residues 295 to 344 (FKTAKEQLWVDQQKKYHQPQRASGSSYGGVKKSLGASRSRGILGKFVPPI) is necessary and sufficient for interaction with RAD51. K339 bears the N6-acetyllysine mark. ATP is bound by residues A404 and 444 to 449 (GTGKTL).

It belongs to the AAA ATPase family. As to quaternary structure, hexamer. Interacts (via N-terminal one-half region) with RAD51; the interaction is direct. Interacts (via N-terminal one-half region) with SPIDR (via the C-terminal region); the interaction is direct. Interacts with FIRRM; may regulate homologous recombination. The cofactor is Mg(2+).

It localises to the nucleus. It is found in the cytoplasm. The protein resides in the perinuclear region. It catalyses the reaction ATP + H2O = ADP + phosphate + H(+). Its function is as follows. Involved in DNA double-strand break (DBS) repair via homologous recombination (HR). Recruited at DSB sites independently of BRCA2, RAD51 and RAD51 paralogs in a H2AX-dependent manner. May regulate osteoblast proliferation and differentiation. May play a role in the control of male meiosis dynamic. This chain is Fidgetin-like protein 1 (FIGNL1), found in Homo sapiens (Human).